Here is a 121-residue protein sequence, read N- to C-terminus: Large ribosomal subunit protein uL14c (121 aa).

As to quaternary structure, component of the chloroplast large ribosomal subunit (LSU). Mature 70S chloroplast ribosomes of higher plants consist of a small (30S) and a large (50S) subunit. The 30S small subunit contains 1 molecule of ribosomal RNA (16S rRNA) and 24 different proteins. The 50S large subunit contains 3 rRNA molecules (23S, 5S and 4.5S rRNA) and 33 different proteins.

The protein localises to the plastid. The protein resides in the chloroplast. Component of the chloroplast ribosome (chloro-ribosome), a dedicated translation machinery responsible for the synthesis of chloroplast genome-encoded proteins, including proteins of the transcription and translation machinery and components of the photosynthetic apparatus. The polypeptide is Large ribosomal subunit protein uL14c (Spinacia oleracea (Spinach)).